Consider the following 407-residue polypeptide: Imidazolonepropionase (407 aa).

The Fe(3+) site is built by histidine 72 and histidine 74. Positions 72 and 74 each coordinate Zn(2+). 4-imidazolone-5-propanoate-binding residues include arginine 81, tyrosine 144, and histidine 177. Position 144 (tyrosine 144) interacts with N-formimidoyl-L-glutamate. Residue histidine 242 coordinates Fe(3+). Histidine 242 is a binding site for Zn(2+). Glutamine 245 serves as a coordination point for 4-imidazolone-5-propanoate. Aspartate 317 contributes to the Fe(3+) binding site. Aspartate 317 contacts Zn(2+). The N-formimidoyl-L-glutamate site is built by asparagine 319 and glycine 321. Residue threonine 322 coordinates 4-imidazolone-5-propanoate.

Belongs to the metallo-dependent hydrolases superfamily. HutI family. It depends on Zn(2+) as a cofactor. Fe(3+) serves as cofactor.

The protein resides in the cytoplasm. The catalysed reaction is 4-imidazolone-5-propanoate + H2O = N-formimidoyl-L-glutamate. It functions in the pathway amino-acid degradation; L-histidine degradation into L-glutamate; N-formimidoyl-L-glutamate from L-histidine: step 3/3. Catalyzes the hydrolytic cleavage of the carbon-nitrogen bond in imidazolone-5-propanoate to yield N-formimidoyl-L-glutamate. It is the third step in the universal histidine degradation pathway. In Rhizobium rhizogenes (Agrobacterium rhizogenes), this protein is Imidazolonepropionase.